Here is a 280-residue protein sequence, read N- to C-terminus: 2-dehydro-3-deoxyphosphooctonate aldolase (280 aa).

Belongs to the KdsA family.

It is found in the cytoplasm. The enzyme catalyses D-arabinose 5-phosphate + phosphoenolpyruvate + H2O = 3-deoxy-alpha-D-manno-2-octulosonate-8-phosphate + phosphate. The protein operates within carbohydrate biosynthesis; 3-deoxy-D-manno-octulosonate biosynthesis; 3-deoxy-D-manno-octulosonate from D-ribulose 5-phosphate: step 2/3. It functions in the pathway bacterial outer membrane biogenesis; lipopolysaccharide biosynthesis. The polypeptide is 2-dehydro-3-deoxyphosphooctonate aldolase (Neisseria meningitidis serogroup A / serotype 4A (strain DSM 15465 / Z2491)).